A 352-amino-acid polypeptide reads, in one-letter code: Probable gamma-glutamyl hydrolase 3 (352 aa).

A signal peptide spans 1 to 19 (MWRFCFFLSLLFFDVSAVK). In terms of domain architecture, Gamma-glutamyl hydrolase spans 49 to 352 (AADPNLNYKP…SGDDEVYIFT (304 aa)). Cysteine 166 (nucleophile) is an active-site residue. Histidine 279 is an active-site residue.

It belongs to the peptidase C26 family.

The protein localises to the vacuole. Its subcellular location is the secreted. The protein resides in the extracellular space. It is found in the cell wall. It carries out the reaction (6S)-5,6,7,8-tetrahydrofolyl-(gamma-L-Glu)(n) + (n-1) H2O = (6S)-5,6,7,8-tetrahydrofolate + (n-1) L-glutamate. In terms of biological role, cleaves the polyglutamate sidechains of folate polyglutamates in the vacuole. Is important for polyglutamyl tail length determination before vacuolar exit. Plays a role on folate stability and intracellular folate content. The protein is Probable gamma-glutamyl hydrolase 3 (GGH3) of Arabidopsis thaliana (Mouse-ear cress).